Consider the following 154-residue polypeptide: Ribosome maturation factor RimP (154 aa).

Belongs to the RimP family.

Its subcellular location is the cytoplasm. Required for maturation of 30S ribosomal subunits. The protein is Ribosome maturation factor RimP of Prochlorococcus marinus (strain MIT 9313).